The chain runs to 655 residues: MGIFSIANQHIRFAVKLATAIVLALFVGFHFQLETPRWAVLTAAIVAAGTAFAAGGEPYSGAIRYRGFLRIIGTFIGCIAGLVIIIAMIRAPLLMILVCCIWAGFCTWISSLVRIENSYAWGLAGYTALIIVITIQPEPLLTPQFAVERCSEIVIGIVCAIMADLLFSPRSIKQEVDRELESLLVAQYQLMQLCIKHGDGEVVDKAWGDLVRRTTALQGMRSNLNMESSRWARANRRLKAINTLSLTLITQSCETYLIQNTRPELITDTFREFFDTPVETAQDVHKQLKRLRRVIAWTGERETPVTIYSWVAAATRYQLLKRGVISNTKINATEEEILQGEPEVKVESAERHHAMVNFWRTTLSCILGTLFWLWTGWTSGSGAMVMIAVVTSLAMRLPNPRMVAIDFIYGTLAALPLGLLYFLVIIPNTQQSMLLLCISLAVLGFFLGIEVQKRRLGSMGALASTINIIVLDNPMTFHFSQFLDSALGQIVGCVLAFTVILLVRDKSRDRTGRVLLNQFVSAAVSAMTTNVARRKENHLPALYQQLFLLMNKFPGDLPKFRLALTMIIAHQRLRDAPIPVNEDLSAFHRQMRRTADHVISARSDDKRRRYFGQLLEELEIYQEKLRIWQAPPQVTEPVNRLAGMLHKYQHALTDS.

Topologically, residues 1–12 are periplasmic; it reads MGIFSIANQHIR. The helical transmembrane segment at 13–33 threads the bilayer; that stretch reads FAVKLATAIVLALFVGFHFQL. Residues 34-37 lie on the Cytoplasmic side of the membrane; it reads ETPR. A helical transmembrane segment spans residues 38–58; it reads WAVLTAAIVAAGTAFAAGGEP. Residues 59-68 lie on the Periplasmic side of the membrane; that stretch reads YSGAIRYRGF. Residues 69-89 traverse the membrane as a helical segment; sequence LRIIGTFIGCIAGLVIIIAMI. At 90 to 92 the chain is on the cytoplasmic side; the sequence is RAP. A helical membrane pass occupies residues 93–113; sequence LLMILVCCIWAGFCTWISSLV. Residues 114–120 lie on the Periplasmic side of the membrane; sequence RIENSYA. Residues 121–141 traverse the membrane as a helical segment; sequence WGLAGYTALIIVITIQPEPLL. The Cytoplasmic segment spans residues 142 to 151; it reads TPQFAVERCS. The chain crosses the membrane as a helical span at residues 152–172; that stretch reads EIVIGIVCAIMADLLFSPRSI. The Periplasmic segment spans residues 173–369; it reads KQEVDRELES…RTTLSCILGT (197 aa). A helical membrane pass occupies residues 370-390; it reads LFWLWTGWTSGSGAMVMIAVV. Residues 391-406 lie on the Cytoplasmic side of the membrane; the sequence is TSLAMRLPNPRMVAID. A helical membrane pass occupies residues 407–427; that stretch reads FIYGTLAALPLGLLYFLVIIP. The Periplasmic segment spans residues 428–430; it reads NTQ. A helical membrane pass occupies residues 431-451; that stretch reads QSMLLLCISLAVLGFFLGIEV. Residues 452 to 458 lie on the Cytoplasmic side of the membrane; the sequence is QKRRLGS. A helical membrane pass occupies residues 459–479; the sequence is MGALASTINIIVLDNPMTFHF. The Periplasmic portion of the chain corresponds to 480 to 481; the sequence is SQ. Residues 482 to 502 traverse the membrane as a helical segment; that stretch reads FLDSALGQIVGCVLAFTVILL. Residues 503–655 are Cytoplasmic-facing; sequence VRDKSRDRTG…HKYQHALTDS (153 aa).

It belongs to the aromatic acid exporter ArAE (TC 2.A.85) family.

Its subcellular location is the cell inner membrane. Functionally, forms an efflux pump with AaeA. Could function as a metabolic relief valve, allowing to eliminate certain compounds when they accumulate to high levels in the cell. Substrates are p-hydroxybenzoic acid (pHBA), 6-hydroxy-2-naphthoic and 2-hydroxycinnamate. The sequence is that of p-hydroxybenzoic acid efflux pump subunit AaeB from Escherichia coli (strain K12).